A 264-amino-acid polypeptide reads, in one-letter code: Thymidylate synthase (264 aa).

Arg21 contacts dUMP. Residue His51 coordinates (6R)-5,10-methylene-5,6,7,8-tetrahydrofolate. 126–127 provides a ligand contact to dUMP; it reads RR. The Nucleophile role is filled by Cys146. Residues 166–169, Asn177, and 207–209 each bind dUMP; these read RSCD and HLY. Residue Asp169 coordinates (6R)-5,10-methylene-5,6,7,8-tetrahydrofolate. A (6R)-5,10-methylene-5,6,7,8-tetrahydrofolate-binding site is contributed by Ser263.

The protein belongs to the thymidylate synthase family. Bacterial-type ThyA subfamily. In terms of assembly, homodimer.

Its subcellular location is the cytoplasm. The catalysed reaction is dUMP + (6R)-5,10-methylene-5,6,7,8-tetrahydrofolate = 7,8-dihydrofolate + dTMP. It participates in pyrimidine metabolism; dTTP biosynthesis. Functionally, catalyzes the reductive methylation of 2'-deoxyuridine-5'-monophosphate (dUMP) to 2'-deoxythymidine-5'-monophosphate (dTMP) while utilizing 5,10-methylenetetrahydrofolate (mTHF) as the methyl donor and reductant in the reaction, yielding dihydrofolate (DHF) as a by-product. This enzymatic reaction provides an intracellular de novo source of dTMP, an essential precursor for DNA biosynthesis. This chain is Thymidylate synthase, found in Wigglesworthia glossinidia brevipalpis.